A 434-amino-acid chain; its full sequence is Tol-Pal system protein TolB (434 aa).

The signal sequence occupies residues 1 to 28 (MMNTRVWCKIIGMLALLVWLVSSPSVFA).

Belongs to the TolB family. In terms of assembly, the Tol-Pal system is composed of five core proteins: the inner membrane proteins TolA, TolQ and TolR, the periplasmic protein TolB and the outer membrane protein Pal. They form a network linking the inner and outer membranes and the peptidoglycan layer.

It is found in the periplasm. Its function is as follows. Part of the Tol-Pal system, which plays a role in outer membrane invagination during cell division and is important for maintaining outer membrane integrity. This chain is Tol-Pal system protein TolB, found in Nitrosococcus oceani (strain ATCC 19707 / BCRC 17464 / JCM 30415 / NCIMB 11848 / C-107).